The primary structure comprises 126 residues: Large ribosomal subunit protein bL12 (126 aa).

Belongs to the bacterial ribosomal protein bL12 family. Homodimer. Part of the ribosomal stalk of the 50S ribosomal subunit. Forms a multimeric L10(L12)X complex, where L10 forms an elongated spine to which 2 to 4 L12 dimers bind in a sequential fashion. Binds GTP-bound translation factors.

Its function is as follows. Forms part of the ribosomal stalk which helps the ribosome interact with GTP-bound translation factors. Is thus essential for accurate translation. This Rhizorhabdus wittichii (strain DSM 6014 / CCUG 31198 / JCM 15750 / NBRC 105917 / EY 4224 / RW1) (Sphingomonas wittichii) protein is Large ribosomal subunit protein bL12.